We begin with the raw amino-acid sequence, 186 residues long: Translation initiation factor IF-3 (186 aa).

The protein belongs to the IF-3 family. Monomer.

Its subcellular location is the cytoplasm. Functionally, IF-3 binds to the 30S ribosomal subunit and shifts the equilibrium between 70S ribosomes and their 50S and 30S subunits in favor of the free subunits, thus enhancing the availability of 30S subunits on which protein synthesis initiation begins. The protein is Translation initiation factor IF-3 of Borrelia garinii subsp. bavariensis (strain ATCC BAA-2496 / DSM 23469 / PBi) (Borreliella bavariensis).